A 377-amino-acid polypeptide reads, in one-letter code: Fructose-bisphosphate aldolase 1, chloroplastic (377 aa).

Substrate contacts are provided by R74 and K164. Residue E204 is the Proton acceptor of the active site. K246 acts as the Schiff-base intermediate with dihydroxyacetone-P in catalysis.

This sequence belongs to the class I fructose-bisphosphate aldolase family.

It localises to the plastid. The protein localises to the chloroplast. The enzyme catalyses beta-D-fructose 1,6-bisphosphate = D-glyceraldehyde 3-phosphate + dihydroxyacetone phosphate. The protein operates within carbohydrate degradation; glycolysis; D-glyceraldehyde 3-phosphate and glycerone phosphate from D-glucose: step 4/4. This Chlamydomonas reinhardtii (Chlamydomonas smithii) protein is Fructose-bisphosphate aldolase 1, chloroplastic (ALDCHL).